Here is a 155-residue protein sequence, read N- to C-terminus: Effector protein PevD1 (155 aa).

Positions 1–18 (MQFTLAAAAALFGASALA) are cleaved as a signal peptide. The region spanning 33–148 (NMYENIDIAD…NPTTIVIDSL (116 aa)) is the AA1-like domain. 2 cysteine pairs are disulfide-bonded: Cys-70-Cys-84 and Cys-125-Cys-135.

Monomer. Interacts with Arabidopsis thaliana NRP.

Its subcellular location is the secreted. Effector protein. Elicits a hypersensitive response (HR) in tobacco plants (N.tabacum) and cotton (G.hirsutum). Boosts systemic acquired resistance (SAR) to tobacco mosaic virus (TMV) infection in N.tabacum and to V.dhaliae infection in primed cotton seedlings. The protein is Effector protein PevD1 of Verticillium dahliae (Verticillium wilt).